We begin with the raw amino-acid sequence, 213 residues long: Thiamine-phosphate synthase (213 aa).

Residues 39–43 (QLREK) and N71 contribute to the 4-amino-2-methyl-5-(diphosphooxymethyl)pyrimidine site. D72 and D91 together coordinate Mg(2+). S110 is a 4-amino-2-methyl-5-(diphosphooxymethyl)pyrimidine binding site. Position 136–138 (136–138 (TGT)) interacts with 2-[(2R,5Z)-2-carboxy-4-methylthiazol-5(2H)-ylidene]ethyl phosphate. K139 is a binding site for 4-amino-2-methyl-5-(diphosphooxymethyl)pyrimidine. Residues G166 and 186–187 (VS) each bind 2-[(2R,5Z)-2-carboxy-4-methylthiazol-5(2H)-ylidene]ethyl phosphate.

It belongs to the thiamine-phosphate synthase family. The cofactor is Mg(2+).

The catalysed reaction is 2-[(2R,5Z)-2-carboxy-4-methylthiazol-5(2H)-ylidene]ethyl phosphate + 4-amino-2-methyl-5-(diphosphooxymethyl)pyrimidine + 2 H(+) = thiamine phosphate + CO2 + diphosphate. It catalyses the reaction 2-(2-carboxy-4-methylthiazol-5-yl)ethyl phosphate + 4-amino-2-methyl-5-(diphosphooxymethyl)pyrimidine + 2 H(+) = thiamine phosphate + CO2 + diphosphate. It carries out the reaction 4-methyl-5-(2-phosphooxyethyl)-thiazole + 4-amino-2-methyl-5-(diphosphooxymethyl)pyrimidine + H(+) = thiamine phosphate + diphosphate. It functions in the pathway cofactor biosynthesis; thiamine diphosphate biosynthesis; thiamine phosphate from 4-amino-2-methyl-5-diphosphomethylpyrimidine and 4-methyl-5-(2-phosphoethyl)-thiazole: step 1/1. Functionally, condenses 4-methyl-5-(beta-hydroxyethyl)thiazole monophosphate (THZ-P) and 2-methyl-4-amino-5-hydroxymethyl pyrimidine pyrophosphate (HMP-PP) to form thiamine monophosphate (TMP). The chain is Thiamine-phosphate synthase from Clostridium botulinum (strain Eklund 17B / Type B).